The following is a 410-amino-acid chain: Cysteine desulfurase IscS (410 aa).

Pyridoxal 5'-phosphate-binding positions include 80–81 (AT), Asn-160, Gln-188, and 208–210 (SGH). Lys-211 carries the post-translational modification N6-(pyridoxal phosphate)lysine. Thr-248 contacts pyridoxal 5'-phosphate. The active-site Cysteine persulfide intermediate is Cys-334. [2Fe-2S] cluster is bound at residue Cys-334.

This sequence belongs to the class-V pyridoxal-phosphate-dependent aminotransferase family. NifS/IscS subfamily. In terms of assembly, homodimer. Forms a heterotetramer with IscU, interacts with other sulfur acceptors. The cofactor is pyridoxal 5'-phosphate.

It is found in the cytoplasm. It carries out the reaction (sulfur carrier)-H + L-cysteine = (sulfur carrier)-SH + L-alanine. It participates in cofactor biosynthesis; iron-sulfur cluster biosynthesis. Master enzyme that delivers sulfur to a number of partners involved in Fe-S cluster assembly, tRNA modification or cofactor biosynthesis. Catalyzes the removal of elemental sulfur atoms from cysteine to produce alanine. Functions as a sulfur delivery protein for Fe-S cluster synthesis onto IscU, an Fe-S scaffold assembly protein, as well as other S acceptor proteins. This is Cysteine desulfurase IscS from Rickettsia bellii (strain OSU 85-389).